The following is a 661-amino-acid chain: Translation factor GUF1 homolog, mitochondrial (661 aa).

A tr-type G domain is found at 59–242 (ENIRNFCIVA…AIIDRIPSPK (184 aa)). GTP-binding positions include 68–75 (AHVDHGKS), 135–139 (DTPGH), and 189–192 (NKVD).

This sequence belongs to the TRAFAC class translation factor GTPase superfamily. Classic translation factor GTPase family. LepA subfamily.

The protein resides in the mitochondrion inner membrane. The enzyme catalyses GTP + H2O = GDP + phosphate + H(+). Its function is as follows. Promotes mitochondrial protein synthesis. May act as a fidelity factor of the translation reaction, by catalyzing a one-codon backward translocation of tRNAs on improperly translocated ribosomes. Binds to mitochondrial ribosomes in a GTP-dependent manner. The polypeptide is Translation factor GUF1 homolog, mitochondrial (Ixodes scapularis (Black-legged tick)).